Reading from the N-terminus, the 29-residue chain is RICPRILMECSSDSDCLAECICLEQGFCG.

Cystine bridges form between Cys-3-Cys-20, Cys-10-Cys-22, and Cys-16-Cys-28.

Belongs to the protease inhibitor I7 (squash-type serine protease inhibitor) family.

Its subcellular location is the secreted. Its function is as follows. Inhibits trypsin. The protein is Trypsin inhibitor 1 of Luffa aegyptiaca (Sponge gourd).